The primary structure comprises 170 residues: MTGNDIVVLGRLADPYGIQGWLWLYPFGDDPLAWAEMPVWWIAREGEPWRECRLKSLKAHGNGVVVLLDGVADRTAAESMKGVLVGAPREALPTTEKNEFYWTDLIGLDVINTADERIGKVVGLIETGANSVLRVMGDDKVERLLPFVSAVVLAVEKEAGQIRVEWGSDW.

The region spanning 97–170 (KNEFYWTDLI…QIRVEWGSDW (74 aa)) is the PRC barrel domain.

Belongs to the RimM family. Binds ribosomal protein uS19.

Its subcellular location is the cytoplasm. Its function is as follows. An accessory protein needed during the final step in the assembly of 30S ribosomal subunit, possibly for assembly of the head region. Essential for efficient processing of 16S rRNA. May be needed both before and after RbfA during the maturation of 16S rRNA. It has affinity for free ribosomal 30S subunits but not for 70S ribosomes. The chain is Ribosome maturation factor RimM from Dechloromonas aromatica (strain RCB).